The sequence spans 198 residues: Probable GTP-binding protein EngB (198 aa).

In terms of domain architecture, EngB-type G spans 22 to 195; the sequence is DLPEIALAGR…WKAIHKFTKT (174 aa). GTP contacts are provided by residues 30-37, 57-61, 75-78, 142-145, and 174-176; these read GRSNVGKS, GKTQT, DVPG, TKAD, and FSS. Mg(2+) is bound by residues Ser-37 and Thr-59.

Belongs to the TRAFAC class TrmE-Era-EngA-EngB-Septin-like GTPase superfamily. EngB GTPase family. Mg(2+) serves as cofactor.

In terms of biological role, necessary for normal cell division and for the maintenance of normal septation. The protein is Probable GTP-binding protein EngB of Bacillus cytotoxicus (strain DSM 22905 / CIP 110041 / 391-98 / NVH 391-98).